Here is a 141-residue protein sequence, read N- to C-terminus: MEIRIFRQDDFEAVITLWERCDLLRPWNDPEMDIERKLNHDPDLFLVAEVNGEIVGSVMGGYDGHRGSAYYLGVHPDFRGRGIANALISRLEKKLIARGCPKIHLMVREDNDAVIGMYEKLEYETVDCITLGKRLIEDREY.

The N-acetyltransferase domain maps to 1-141; that stretch reads MEIRIFRQDD…GKRLIEDREY (141 aa).

The protein belongs to the acetyltransferase family. YpeA subfamily.

The sequence is that of Acetyltransferase ECA0875 from Pectobacterium atrosepticum (strain SCRI 1043 / ATCC BAA-672) (Erwinia carotovora subsp. atroseptica).